We begin with the raw amino-acid sequence, 571 residues long: Apolipoprotein N-acyltransferase (571 aa).

Transmembrane regions (helical) follow at residues 13–33 (VVLWLSGPPFAIGPLVFIALV), 51–68 (LYAASLAYWLLSLQGLRY), 72–92 (LMFLPWIALSGYLAIYPVLFI), 118–138 (LVAAVVWVGLEWIRNYFFTGI), 152–172 (MLIQIADLGGTYAVSFVIVCV), and 199–219 (LVTAGGLLIATMVYGAMSMNA). Residues 234–527 (NELTVYEQDI…SDVIYAQPRR (294 aa)) form the CN hydrolase domain. The Proton acceptor role is filled by Glu275. Lys380 is a catalytic residue. Cys430 acts as the Nucleophile in catalysis. The chain crosses the membrane as a helical span at residues 542-562 (AGLMGAATLCGLAWMTFEWLM).

The protein belongs to the CN hydrolase family. Apolipoprotein N-acyltransferase subfamily.

The protein localises to the cell inner membrane. The catalysed reaction is N-terminal S-1,2-diacyl-sn-glyceryl-L-cysteinyl-[lipoprotein] + a glycerophospholipid = N-acyl-S-1,2-diacyl-sn-glyceryl-L-cysteinyl-[lipoprotein] + a 2-acyl-sn-glycero-3-phospholipid + H(+). The protein operates within protein modification; lipoprotein biosynthesis (N-acyl transfer). In terms of biological role, catalyzes the phospholipid dependent N-acylation of the N-terminal cysteine of apolipoprotein, the last step in lipoprotein maturation. The sequence is that of Apolipoprotein N-acyltransferase from Rhodopirellula baltica (strain DSM 10527 / NCIMB 13988 / SH1).